We begin with the raw amino-acid sequence, 334 residues long: Inositol 2-dehydrogenase (334 aa).

The protein belongs to the Gfo/Idh/MocA family. As to quaternary structure, homotetramer.

It catalyses the reaction myo-inositol + NAD(+) = scyllo-inosose + NADH + H(+). Functionally, involved in the oxidation of myo-inositol (MI) to 2-keto-myo-inositol (2KMI or 2-inosose). This is Inositol 2-dehydrogenase from Cereibacter sphaeroides (strain ATCC 17023 / DSM 158 / JCM 6121 / CCUG 31486 / LMG 2827 / NBRC 12203 / NCIMB 8253 / ATH 2.4.1.) (Rhodobacter sphaeroides).